A 142-amino-acid chain; its full sequence is Hemoglobin subunit alpha-2 (142 aa).

The region spanning 2–142 (VLSAADKSNV…VSTVLTSKYR (141 aa)) is the Globin domain. His59 contacts O2. His88 contacts heme b.

It belongs to the globin family. In terms of assembly, heterotetramer of two alpha chains and two beta chains.

Functionally, involved in oxygen transport from the lung to the various peripheral tissues. Its function is as follows. Hemopressin acts as an antagonist peptide of the cannabinoid receptor CNR1. Hemopressin-binding efficiently blocks cannabinoid receptor CNR1 and subsequent signaling. The polypeptide is Hemoglobin subunit alpha-2 (HBA2) (Capra hircus (Goat)).